Here is a 1995-residue protein sequence, read N- to C-terminus: Myosin-14 (1995 aa).

The disordered stretch occupies residues 1–46 (MAAVTMSVPGRKAPPRPGPVPEAAQPFLFTPRGPSAGGGPGSGTSP). Position 2 is an N-acetylalanine (Ala2). Residues 51–101 (TARRLVWVPSELHGFEAAALRDEGEEEAEVELAESGRRLRLPRDQIQRMNP) enclose the Myosin N-terminal SH3-like domain. At Ser60 the chain carries Phosphoserine. The Myosin motor domain maps to 105–800 (SKAEDMAELT…VLAQLEEERD (696 aa)). 198 to 205 (GESGAGKT) lines the ATP pocket. The actin-binding stretch occupies residues 678–700 (LSRLMATLSNTNPSFVRCIVPNH). Residues 803–832 (VTDIIVSFQAAARGYLARRAFQKRQQQQSA) enclose the IQ domain. Positions 862–1947 (LQVTRQDEVL…VTTLRNRLRR (1086 aa)) form a coiled coil. Thr1194 is subject to Phosphothreonine. Disordered stretches follow at residues 1371–1415 (EEAA…RRAA), 1592–1623 (QHER…VERD), 1905–1942 (EAEE…TTLR), and 1958–1995 (RQVF…AHPQ). The span at 1930–1942 (SAESMNREVTTLR) shows a compositional bias: polar residues. Ser1969, Ser1980, Ser1983, and Ser1989 each carry phosphoserine. Over residues 1981-1995 (GPSPEPEGSPPAHPQ) the composition is skewed to pro residues.

This sequence belongs to the TRAFAC class myosin-kinesin ATPase superfamily. Myosin family. Myosin is a hexameric protein that consists of 2 heavy chain subunits (MHC), 2 alkali light chain subunits (MLC) and 2 regulatory light chain subunits (MLC-2). In terms of tissue distribution, high levels of expression are found in brain (highest in corpus callosum), heart, kidney, liver, lung, small intestine, colon and skeletal muscle. Expression is low in organs composed mainly of smooth muscle, such as aorta, uterus and urinary bladder. No detectable expression is found in thymus, spleen, placenta and lymphocytes.

Cellular myosin that appears to play a role in cytokinesis, cell shape, and specialized functions such as secretion and capping. The sequence is that of Myosin-14 (MYH14) from Homo sapiens (Human).